The sequence spans 193 residues: Xanthine phosphoribosyltransferase (193 aa).

L20 and N27 together coordinate xanthine. 5-phospho-alpha-D-ribose 1-diphosphate is bound at residue 128–132; that stretch reads ANGDA. K156 serves as a coordination point for xanthine.

This sequence belongs to the purine/pyrimidine phosphoribosyltransferase family. Xpt subfamily. In terms of assembly, homodimer.

Its subcellular location is the cytoplasm. The catalysed reaction is XMP + diphosphate = xanthine + 5-phospho-alpha-D-ribose 1-diphosphate. It participates in purine metabolism; XMP biosynthesis via salvage pathway; XMP from xanthine: step 1/1. Converts the preformed base xanthine, a product of nucleic acid breakdown, to xanthosine 5'-monophosphate (XMP), so it can be reused for RNA or DNA synthesis. This chain is Xanthine phosphoribosyltransferase, found in Staphylococcus haemolyticus (strain JCSC1435).